The sequence spans 467 residues: Protein PHOSPHATE STARVATION RESPONSE 3 (467 aa).

Residues 227–266 (MSLPVSSCSDQEDLQDARSPAKVQLSSSRSSSGTASCNKP) form a disordered region. The HTH myb-type domain occupies 262-322 (SCNKPRLRWT…HLQKYRLAKY (61 aa)). Residues 293 to 318 (PKGVLKLMKVEGLTIYHIKSHLQKYR) constitute a DNA-binding region (H-T-H motif). Residues 327–337 (KEDKKQEEKKT) are compositionally biased toward basic and acidic residues. Disordered stretches follow at residues 327–353 (KEDK…KSAQ) and 400–467 (RESI…VHDE). Residues 402–412 (SISSMTSTTEG) show a composition bias toward polar residues. 2 stretches are compositionally biased toward basic and acidic residues: residues 419-428 (PMEKTEDKAE) and 438-467 (RITD…VHDE).

Expressed in the root cap and in the exodermis of the root, in the root tip of lateral roots, in the mesophyll cells of the leaf, in pollen, vascular cylinder of the anther and the veins of the lemma, palea and pistils, and in the xylem and phloem regions of large vascular bundles, small vascular bundles and diffuse vascular bundles in node I.

It is found in the nucleus. Functionally, transcription factor involved in phosphate starvation signaling. Binds to P1BS, an imperfect palindromic sequence 5'-GNATATNC-3', to promote the expression of inorganic phosphate (Pi) starvation-responsive genes. Functionally redundant with PHR1 and PHR2 in regulating Pi starvation response and Pi homeostasis. The chain is Protein PHOSPHATE STARVATION RESPONSE 3 from Oryza sativa subsp. japonica (Rice).